Here is a 356-residue protein sequence, read N- to C-terminus: Probable dual-specificity RNA methyltransferase RlmN (356 aa).

E100 acts as the Proton acceptor in catalysis. In terms of domain architecture, Radical SAM core spans 106 to 340; it reads TNSRLTTCVS…VSLRASRGLD (235 aa). C113 and C345 form a disulfide bridge. C120, C124, and C127 together coordinate [4Fe-4S] cluster. Residues 167-168, S197, 226-228, and N302 each bind S-adenosyl-L-methionine; these read GE and SLH. The S-methylcysteine intermediate role is filled by C345.

It belongs to the radical SAM superfamily. RlmN family. It depends on [4Fe-4S] cluster as a cofactor.

The protein localises to the cytoplasm. The enzyme catalyses adenosine(2503) in 23S rRNA + 2 reduced [2Fe-2S]-[ferredoxin] + 2 S-adenosyl-L-methionine = 2-methyladenosine(2503) in 23S rRNA + 5'-deoxyadenosine + L-methionine + 2 oxidized [2Fe-2S]-[ferredoxin] + S-adenosyl-L-homocysteine. The catalysed reaction is adenosine(37) in tRNA + 2 reduced [2Fe-2S]-[ferredoxin] + 2 S-adenosyl-L-methionine = 2-methyladenosine(37) in tRNA + 5'-deoxyadenosine + L-methionine + 2 oxidized [2Fe-2S]-[ferredoxin] + S-adenosyl-L-homocysteine. Functionally, specifically methylates position 2 of adenine 2503 in 23S rRNA and position 2 of adenine 37 in tRNAs. This Prochlorococcus marinus (strain MIT 9211) protein is Probable dual-specificity RNA methyltransferase RlmN.